Consider the following 321-residue polypeptide: LAGVEGIGVNYGMMGSDLPSPDKVVALYKANNITDVRIFHPDTNVLEALRNSGLGVVLGTLNSDLAPLASDASYAASWVHSYVQPFAGAVSFRYINAGNEVIPGESAALVLPAMKNLEAALQAAGLSVPVTTAMATSVLGTSYPPSQGTFSEAALPTVGPIVSHLASSGTPLLVNVYPYFAYSADPSSVRLDYALLSSSAAVAVTDNGVEYANMFDAILDAVYAAVEKAGGGESLELVVSETGWPSGGGGYGASVENAAAYINNLVRHVGGTPRRPGKAVETYIFAMFNENQKPEGVEQNFGMFQPDMSQVYHVDFTASSS.

The first 6 residues, 1 to 6 (LAGVEG), serve as a signal peptide directing secretion. E100 serves as the catalytic Proton donor. Residue E241 is the Nucleophile of the active site.

Belongs to the glycosyl hydrolase 17 family.

The catalysed reaction is Hydrolysis of (1-&gt;3)-beta-D-glucosidic linkages in (1-&gt;3)-beta-D-glucans.. May provide a degree of protection against microbial invasion of germinated barley grain through its ability to degrade fungal cell wall polysaccharides. This chain is Putative glucan endo-1,3-beta-glucosidase GVI, found in Hordeum vulgare (Barley).